Consider the following 255-residue polypeptide: 5'-nucleotidase SurE (255 aa).

Aspartate 8, aspartate 9, serine 40, and asparagine 92 together coordinate a divalent metal cation.

It belongs to the SurE nucleotidase family. A divalent metal cation serves as cofactor.

The protein resides in the cytoplasm. It carries out the reaction a ribonucleoside 5'-phosphate + H2O = a ribonucleoside + phosphate. Its function is as follows. Nucleotidase that shows phosphatase activity on nucleoside 5'-monophosphates. This Brucella canis (strain ATCC 23365 / NCTC 10854 / RM-666) protein is 5'-nucleotidase SurE.